The chain runs to 1123 residues: Eukaryotic translation initiation factor 2-alpha kinase PK4 (1123 aa).

Residues 1-30 (MKKRIRSSYKVGSSNKYHKKNYTDNEKDKK) form a disordered region. The segment covering 21-30 (NYTDNEKDKK) has biased composition (basic and acidic residues). ATP contacts are provided by residues 245-253 (IGQGGFGSV) and K270. Disordered stretches follow at residues 409–493 (FYSD…NDEG), 572–609 (RNED…NELD), and 742–800 (ENDD…DDDI). A compositionally biased stretch (basic and acidic residues) spans 419 to 428 (KNKENPEKNH). Residues 455–477 (HKLKKRKNKKKKSKKKRKSKSKI) are compositionally biased toward basic residues. Tandem repeats lie at residues 576 to 582 (DKNGLDG), 583 to 589 (DKNGLDG), 590 to 596 (DKNGLDG), 597 to 603 (DKNGLDG), and 604 to 610 (DKNELDD). The 5 X 7 AA tandem repeat of D-K-N-[GE]-L-D-[GD] stretch occupies residues 576–610 (DKNGLDGDKNGLDGDKNGLDGDKNGLDGDKNELDD). Positions 678 to 1049 (TNVESINTNG…KIKVLLDPHL (372 aa)) constitute a Protein kinase domain. Residues 743–754 (NDDDDDDDDDDN) show a composition bias toward acidic residues. Catalysis depends on D886, which acts as the Proton acceptor. At T953 the chain carries Phosphothreonine.

This sequence belongs to the protein kinase superfamily. Ser/Thr protein kinase family. GCN2 subfamily. May form oligomers in response to stress; oligomerization may result in catalytic activity. Interacts with BIP; the interaction is disrupted in response to stress. Post-translationally, auto-phosphorylated.

Its subcellular location is the endoplasmic reticulum membrane. The enzyme catalyses L-seryl-[protein] + ATP = O-phospho-L-seryl-[protein] + ADP + H(+). It catalyses the reaction L-threonyl-[protein] + ATP = O-phospho-L-threonyl-[protein] + ADP + H(+). With respect to regulation, dissociation from BIP and oligomerization, may results autophosphorylation and kinase activity induction. Functionally, during the asexual blood stage, phosphorylates translation factor eIF2alpha in late schizonts resulting in protein translation inhibition. Plays a role in trophozoite differentiation into schizonts. The protein is Eukaryotic translation initiation factor 2-alpha kinase PK4 of Plasmodium falciparum.